The following is a 1843-amino-acid chain: MTDPVLASQLANGTGEMDGLCSELLLIPPPLSNHGILGPVQNTCASGELAPLPADPGCLLVEATATEEGPGNMEIIVEAVTGTLSPGAPEETSGVLVKVVEVYFCERCEQSFAEPTLLSVHQCTETHIQAVQDLSSPPCSVELPPSNLALRGPLQDPSLPDSPLPCPVCRQEFVQPQALKSHFKIHRVTPNMFSCPESGCVFSAEDRKGLQNHLRQTHKAVPVPCSFRGCSLLFGSQQGMELHRQAHYPFHCSHCSFMGSNVKLFRQHQRSHGASARGELSAAVQGLPSQELLPAAKLPPGHREPSEEASTPLPGQESAEEEDAEEEESVTQKDSQKVMDKSQGAQQLEGHVGSGTESLFKTHMCPECKRCFKKRTHLVEHLHLHFPDPSLQCPNCQKFFTSKSKLKTHLLRELGEKAHRCPLCHYSAVERNALNRHMASMHEDISNFYSDTYACPVCREEFRLSQALKEHLKSHTAAAAAEPLPLHCFQEGCTYVAPDRKAFLKHLKEIHGVRAVECRHHSCPMLFATAEAMEAHHKSHYAFHCPHCDFACSNKHLFRKHKKQGHPGSEELRCTFCPFATFNPVAYQDHVGKMHAYEKIHQCSECNFATAHKRVLIRHMLLHTGEKPHKCELCDFTCRDVSYLSKHMLTHSNTKDYMCTECGYVTKWKHYLSVHMRKHAGDLRYQCNQCSYRCHRADQLSSHKLRHQGKSLMCEVCAFACKRKYELQKHMASQHHPGTPAPLYPCRYCSYQSRHKQALLSHENCKHTHLREFHCALCDYRTFSNTTLFFHKRKVHGYMPGDQVWQFCNASQELEGARQCLAPPSDSGPSSQLSAQPEREDREHEIVANSNMDQALPETNEEASPKRQDGIEAPQEDDQVDSPSLGEVEEGGCTLHLEALRVELEPETEPLPLEELTETATVEFRPLDPSGPLGTERPGGLEEPALSSFDSIETPALVAEEEPVVEKLASEPPRNPLISEEAPNTFKAALTAETVPLPPFPESESLLKAMRRQDKEQAEALVLEGRVQMVVIQGEGRAFRCPHCPFITRREKALTLHSKSGCQGRREPLLCPECGASFKQQRGLSTHMMKKCPVLLKKNKALPKPVSPTLHPQLPDNQASQDAESRKPPPLPSKVELLLPKDAPSDLPGGPGVEEPLPTPSDFPTSPPENSLPTGTSEKFHFEQGKFHCSSCTFLCSRLSSITSHVTEGCRGGRGQKRKRGRPQTHAVVLPLNNGDSTLLNTGSTESSPSDGDTAVVQKQKGALFSCPTCPFSCQQERTLRTHQTQGCPLKSGDLHCGLCPFTAPAAAALRLHQKRRHPTASPASGPRPLLQCGDCGFTCKQSRCLQQHRRLKHEGVKPHQCPFCDFSTTRRYRLEAHQSRHTGVGRIPCSSCPQTFGTNSKLRLHQLRVHDKTPTHFCPLCDYSGYLRHDITRHVNSCHQGTPSFSCTQCEAQFSSETALKQHALRRHPEPTPPSSGCPVEVTEGPLHCSHCGLLCPSPASLRGHTRKQHPRLECGACQESFPNRPALDEHRRQHHFSHRCQLCSFAARERVGLVKHYLEQHEESSTAPSDGDAGQPSLCCPFCDFACRHQLVLDHHVKGHGGTRLYKCTDCAYSTKNRQKITWHSRIHTGEKPYHCHLCAYACADPSRLKYHMRIHKEERKYLCPECGYKCKWVNQLKYHMTKHTGLKPYQCPECEYCTNRADALRVHRETRHREARAFMCEQCGKAFKTRFLLRTHLRKHSEAKPYVCNVCHRAFRWAAGLRHHALTHTDRHPFFCRLCSYKAKQKFQVVKHVRRHHPDQADPNQGVGKDPTTPTVHLHDVKLEDPSPPAPPAPSTGPEG.

2 consecutive C2H2-type zinc fingers follow at residues 103–127 (YFCERCEQSFAEPTLLSVHQCTETH) and 164–186 (LPCPVCRQEFVQPQALKSHFKIH). Residues 294-357 (PAAKLPPGHR…LEGHVGSGTE (64 aa)) form a disordered region. Positions 318-329 (SAEEEDAEEEES) are enriched in acidic residues. The span at 330–340 (VTQKDSQKVMD) shows a compositional bias: basic and acidic residues. Residue Ser354 is modified to Phosphoserine. Residues 363–385 (HMCPECKRCFKKRTHLVEHLHLH) form a C2H2-type 3 zinc finger. The C2H2-type 4; degenerate zinc-finger motif lies at 391–413 (LQCPNCQKFFTSKSKLKTHLLRE). 7 C2H2-type zinc fingers span residues 453–475 (YACPVCREEFRLSQALKEHLKSH), 543–566 (FHCPHCDFACSNKHLFRKHKKQGH), 601–623 (HQCSECNFATAHKRVLIRHMLLH), 629–651 (HKCELCDFTCRDVSYLSKHMLTH), 657–679 (YMCTECGYVTKWKHYLSVHMRKH), 685–707 (YQCNQCSYRCHRADQLSSHKLRH), and 744–767 (YPCRYCSYQSRHKQALLSHENCKH). Lys794 is covalently cross-linked (Glycyl lysine isopeptide (Lys-Gly) (interchain with G-Cter in SUMO2)). 2 disordered regions span residues 819–888 (QCLA…LGEV) and 1103–1177 (PKPV…TGTS). A compositionally biased stretch (basic and acidic residues) spans 837–846 (PEREDREHEI). A compositionally biased stretch (pro residues) spans 1157-1167 (LPTPSDFPTSP). Positions 1168 to 1177 (PENSLPTGTS) are enriched in polar residues. C2H2-type zinc fingers lie at residues 1331 to 1354 (LQCGDCGFTCKQSRCLQQHRRLKH), 1388 to 1411 (IPCSSCPQTFGTNSKLRLHQLRVH), 1446 to 1469 (FSCTQCEAQFSSETALKQHALRRH), 1514 to 1537 (LECGACQESFPNRPALDEHRRQHH), 1608 to 1630 (YKCTDCAYSTKNRQKITWHSRIH), 1636 to 1658 (YHCHLCAYACADPSRLKYHMRIH), 1664 to 1686 (YLCPECGYKCKWVNQLKYHMTKH), 1692 to 1715 (YQCPECEYCTNRADALRVHRETRH), and 1721 to 1743 (FMCEQCGKAFKTRFLLRTHLRKH). Residues Lys1353 and Lys1402 each participate in a glycyl lysine isopeptide (Lys-Gly) (interchain with G-Cter in SUMO2) cross-link. Lys1747 is covalently cross-linked (Glycyl lysine isopeptide (Lys-Gly) (interchain with G-Cter in SUMO2)). Residues 1749–1771 (YVCNVCHRAFRWAAGLRHHALTH) form a C2H2-type 21 zinc finger. Residues 1795–1843 (HVRRHHPDQADPNQGVGKDPTTPTVHLHDVKLEDPSPPAPPAPSTGPEG) are disordered. Pro residues predominate over residues 1829 to 1843 (PSPPAPPAPSTGPEG).

It belongs to the krueppel C2H2-type zinc-finger protein family.

The protein resides in the nucleus. Functionally, may be involved in transcriptional regulation. The protein is Zinc finger protein 142 of Mus musculus (Mouse).